Reading from the N-terminus, the 282-residue chain is Bifunctional protein FolD (282 aa).

NADP(+)-binding positions include 164-166 (GRS) and Ser-189.

Belongs to the tetrahydrofolate dehydrogenase/cyclohydrolase family. Homodimer.

The catalysed reaction is (6R)-5,10-methylene-5,6,7,8-tetrahydrofolate + NADP(+) = (6R)-5,10-methenyltetrahydrofolate + NADPH. It carries out the reaction (6R)-5,10-methenyltetrahydrofolate + H2O = (6R)-10-formyltetrahydrofolate + H(+). It functions in the pathway one-carbon metabolism; tetrahydrofolate interconversion. Catalyzes the oxidation of 5,10-methylenetetrahydrofolate to 5,10-methenyltetrahydrofolate and then the hydrolysis of 5,10-methenyltetrahydrofolate to 10-formyltetrahydrofolate. The sequence is that of Bifunctional protein FolD from Streptococcus suis (strain 05ZYH33).